Consider the following 37-residue polypeptide: Kappa-actitoxin-Bcs3b (37 aa).

A ShKT domain is found at 2–37; sequence CKDGFPTATCQHAKLVGNCKNSQKYRANCAKTCGPC. Cystine bridges form between C2/C37, C11/C30, and C20/C34. A crucial for binding to potassium channels region spans residues 25–26; that stretch reads KY.

This sequence belongs to the sea anemone type 1 potassium channel toxin family. Type 1b subfamily.

It localises to the secreted. It is found in the nematocyst. Functionally, inhibits voltage-gated potassium channels (IC(50)=14.42 nM for rKCNA1/Kv1.1, IC(50)=80.4 nM for rKCNA2/Kv1.2, IC(50)=7.76 nM for rKCNA6/Kv1.6, IC(50)=13.12 nM for hKCNA3/Kv1.3, and IC(50)=49.14 nM for insect Shaker IR). Binds the Shaker IR channels in a voltage-independent manner. This Bunodosoma caissarum (Sea anemone) protein is Kappa-actitoxin-Bcs3b.